The primary structure comprises 373 residues: Anhydro-N-acetylmuramic acid kinase (373 aa).

Residue 12–19 (GTSLDGVD) coordinates ATP.

It belongs to the anhydro-N-acetylmuramic acid kinase family.

The catalysed reaction is 1,6-anhydro-N-acetyl-beta-muramate + ATP + H2O = N-acetyl-D-muramate 6-phosphate + ADP + H(+). It functions in the pathway amino-sugar metabolism; 1,6-anhydro-N-acetylmuramate degradation. Its pathway is cell wall biogenesis; peptidoglycan recycling. Its function is as follows. Catalyzes the specific phosphorylation of 1,6-anhydro-N-acetylmuramic acid (anhMurNAc) with the simultaneous cleavage of the 1,6-anhydro ring, generating MurNAc-6-P. Is required for the utilization of anhMurNAc either imported from the medium or derived from its own cell wall murein, and thus plays a role in cell wall recycling. In Salmonella newport (strain SL254), this protein is Anhydro-N-acetylmuramic acid kinase.